The sequence spans 72 residues: Translation initiation factor IF-1 (72 aa).

One can recognise an S1-like domain in the interval 1-72; it reads MAKEEAIEVE…TRGRITYREK (72 aa).

The protein belongs to the IF-1 family. As to quaternary structure, component of the 30S ribosomal translation pre-initiation complex which assembles on the 30S ribosome in the order IF-2 and IF-3, IF-1 and N-formylmethionyl-tRNA(fMet); mRNA recruitment can occur at any time during PIC assembly.

The protein resides in the cytoplasm. In terms of biological role, one of the essential components for the initiation of protein synthesis. Stabilizes the binding of IF-2 and IF-3 on the 30S subunit to which N-formylmethionyl-tRNA(fMet) subsequently binds. Helps modulate mRNA selection, yielding the 30S pre-initiation complex (PIC). Upon addition of the 50S ribosomal subunit IF-1, IF-2 and IF-3 are released leaving the mature 70S translation initiation complex. This is Translation initiation factor IF-1 from Syntrophotalea carbinolica (strain DSM 2380 / NBRC 103641 / GraBd1) (Pelobacter carbinolicus).